Consider the following 237-residue polypeptide: 1-(5-phosphoribosyl)-5-[(5-phosphoribosylamino)methylideneamino] imidazole-4-carboxamide isomerase (237 aa).

The Proton acceptor role is filled by D8. The active-site Proton donor is the D129.

The protein belongs to the HisA/HisF family.

The protein localises to the cytoplasm. The catalysed reaction is 1-(5-phospho-beta-D-ribosyl)-5-[(5-phospho-beta-D-ribosylamino)methylideneamino]imidazole-4-carboxamide = 5-[(5-phospho-1-deoxy-D-ribulos-1-ylimino)methylamino]-1-(5-phospho-beta-D-ribosyl)imidazole-4-carboxamide. It functions in the pathway amino-acid biosynthesis; L-histidine biosynthesis; L-histidine from 5-phospho-alpha-D-ribose 1-diphosphate: step 4/9. The chain is 1-(5-phosphoribosyl)-5-[(5-phosphoribosylamino)methylideneamino] imidazole-4-carboxamide isomerase from Roseiflexus sp. (strain RS-1).